Here is a 213-residue protein sequence, read N- to C-terminus: Thymidine kinase (213 aa).

ATP is bound by residues Gly-22–Thr-29 and Asp-94–Gln-97. The active-site Proton acceptor is the Glu-95. Positions 151, 154, 183, and 186 each coordinate Zn(2+). Residues Arg-185–Pro-213 are disordered. Over residues Thr-193–Pro-213 the composition is skewed to low complexity.

The protein belongs to the thymidine kinase family. In terms of assembly, homotetramer.

Its subcellular location is the cytoplasm. It catalyses the reaction thymidine + ATP = dTMP + ADP + H(+). The polypeptide is Thymidine kinase (Rhodothermus sp. (strain ITI 518)).